Consider the following 146-residue polypeptide: Putative pre-16S rRNA nuclease (146 aa).

Belongs to the YqgF nuclease family.

It localises to the cytoplasm. In terms of biological role, could be a nuclease involved in processing of the 5'-end of pre-16S rRNA. In Methylobacillus flagellatus (strain ATCC 51484 / DSM 6875 / VKM B-1610 / KT), this protein is Putative pre-16S rRNA nuclease.